The primary structure comprises 375 residues: Protein SSUH2 homolog (375 aa).

Expressed in enterocytes of small and large intestinal mucosa (at protein level). Expressed in chromaffine and interstitial cells. Expressed in peripheral blood and gingival cells.

Its subcellular location is the cytoplasm. It is found in the nucleus. Plays a role in odontogenesis. The chain is Protein SSUH2 homolog from Homo sapiens (Human).